Here is a 329-residue protein sequence, read N- to C-terminus: 4-hydroxythreonine-4-phosphate dehydrogenase (329 aa).

Positions 136 and 137 each coordinate substrate. Residues His-166, His-211, and His-266 each contribute to the a divalent metal cation site. Substrate is bound by residues Lys-274, Asn-283, and Arg-292.

It belongs to the PdxA family. As to quaternary structure, homodimer. Requires Zn(2+) as cofactor. Mg(2+) is required as a cofactor. Co(2+) serves as cofactor.

It is found in the cytoplasm. The catalysed reaction is 4-(phosphooxy)-L-threonine + NAD(+) = 3-amino-2-oxopropyl phosphate + CO2 + NADH. It functions in the pathway cofactor biosynthesis; pyridoxine 5'-phosphate biosynthesis; pyridoxine 5'-phosphate from D-erythrose 4-phosphate: step 4/5. Its function is as follows. Catalyzes the NAD(P)-dependent oxidation of 4-(phosphooxy)-L-threonine (HTP) into 2-amino-3-oxo-4-(phosphooxy)butyric acid which spontaneously decarboxylates to form 3-amino-2-oxopropyl phosphate (AHAP). The protein is 4-hydroxythreonine-4-phosphate dehydrogenase of Escherichia coli (strain SE11).